The following is a 307-amino-acid chain: Putative lipid kinase SE_0507 (307 aa).

Residues 3–139 (QPYNHGVLFY…YDVLKVNDLY (137 aa)) form the DAGKc domain. Residues S44, 74 to 80 (GDGTLNE), and T101 each bind ATP. Positions 220, 223, and 225 each coordinate Mg(2+). E281 acts as the Proton acceptor in catalysis.

It belongs to the diacylglycerol/lipid kinase family. The cofactor is Mg(2+).

May catalyze the ATP-dependent phosphorylation of lipids other than diacylglycerol (DAG). This chain is Putative lipid kinase SE_0507, found in Staphylococcus epidermidis (strain ATCC 12228 / FDA PCI 1200).